A 361-amino-acid polypeptide reads, in one-letter code: Free fatty acid receptor 4 (361 aa).

Topologically, residues 1 to 45 (MSPECARAAGDAPLRSLEQANRTRFSFFSDVKGDHRLLLAAVETT) are extracellular. N-linked (GlcNAc...) asparagine glycosylation is present at N21. A helical membrane pass occupies residues 46–66 (VLALIFAVSLLGNVCALVLVA). The Cytoplasmic portion of the chain corresponds to 67-77 (RRRRRGTTACL). The chain crosses the membrane as a helical span at residues 78–98 (VLNLFCADLLFISAIPLVLAV). Residues 99 to 112 (RWTEAWLLGPVACH) lie on the Extracellular side of the membrane. A disulfide bond links C111 and C194. A helical transmembrane segment spans residues 113-133 (LLFYLMTLSGSVTILTLAAVS). Topologically, residues 134 to 156 (LERMVCIVHLQRGVRGPGRRARA) are cytoplasmic. Residues 157–177 (VLLTLIWGYSAVAALPLCVFF) form a helical membrane-spanning segment. Over 178–204 (RVVPQRLPGADQEISICTLIWPTIAGE) the chain is Extracellular. A helical membrane pass occupies residues 205-225 (ISWDVSFVTLNFLVPGLVIVI). Over 226-268 (SYSKILQITKASRKRLTVSLAYSESHQIRVSQQDFRLFRTLFL) the chain is Cytoplasmic. Residues 269–289 (LMVSFFIMWSPIIITILLILI) form a helical membrane-spanning segment. The Extracellular segment spans residues 290–295 (QNFKQD). A helical membrane pass occupies residues 296 to 316 (LVIWPSLFFWVVAFTFANSAL). The Cytoplasmic segment spans residues 317–361 (NPILYNMTLCRNEWKKIFCCFWFPEKGAILTDTSVKRNDLSVISG). Phosphothreonine is present on residues T347 and T349. S350, S357, and S360 each carry phosphoserine.

This sequence belongs to the G-protein coupled receptor 1 family. As to quaternary structure, interacts (via C-terminus) with ARRB2 following LCFAs stimulation. In terms of processing, phosphorylated at two clusters of Ser and Thr residues located in the intracellular C-terminus. Prerequisite for FFAR4 internalization via an ARRB2-dependent pathway. As to expression, highly expressed in lung and colon.

The protein localises to the cell membrane. The protein resides in the endosome membrane. It localises to the lysosome membrane. Its subcellular location is the cell projection. It is found in the cilium membrane. In terms of biological role, G-protein-coupled receptor for long-chain fatty acids (LCFAs) with a major role in adipogenesis, energy metabolism and inflammation. Signals via G-protein and beta-arrestin pathways. LCFAs sensing initiates activation of phosphoinositidase C-linked G proteins GNAQ and GNA11 (G(q)/G(11)), inducing a variety of cellular responses via second messenger pathways such as intracellular calcium mobilization, modulation of cyclic adenosine monophosphate (cAMP) production, and mitogen-activated protein kinases (MAPKs). After LCFAs binding, associates with beta-arrestin ARRB2 that acts as an adapter protein coupling the receptor to specific downstream signaling pathways, as well as mediating receptor endocytosis. In response to dietary fats, plays an important role in the regulation of adipocyte proliferation and differentiation. Acts as a receptor for omega-3 polyunsaturated fatty acids (PUFAs) at primary cilium of perivascular preadipocytes, initiating an adipogenic program via cAMP and CTCF-dependent chromatin remodeling that ultimately results in transcriptional activation of adipogenic genes and cell cycle entry. Induces differentiation of brown and beige adipocytes probably via autocrine and endocrine functions of FGF21 hormone. Contributes to the thermogenic activation of brown adipose tissue and the browning of white adipose tissue. Activates brown adipocytes by initiating intracellular calcium signaling leading to mitochondrial depolarization and fission, and overall increased mitochondrial respiration. Consequently stimulates fatty acid uptake and oxidation in mitochondria together with UCP1-mediated thermogenic respiration, eventually reducing fat mass. Regulates bi-potential differentiation of bone marrow mesenchymal stem cells toward osteoblasts or adipocytes likely by up-regulating distinct integrins. In response to dietary fats regulates hormone secretion and appetite. Stimulates GIP and GLP1 secretion from enteroendocrine cells as well as GCG secretion in pancreatic alpha cells, thereby playing a role in the regulation of blood glucose levels. Negatively regulates glucose-induced SST secretion in pancreatic delta cells. Mediates LCFAs inhibition of GHRL secretion, an appetite-controlling hormone. In taste buds, contributes to sensing of dietary fatty acids by the gustatory system. During the inflammatory response, promotes anti-inflammatory M2 macrophage differentiation in adipose tissue. Mediates the anti-inflammatory effects of omega-3 PUFAs via inhibition of NLRP3 inflammasome activation. In this pathway, interacts with adapter protein ARRB2 and inhibits the priming step triggered by Toll-like receptors (TLRs) at the level of TAK1 and TAB1. Further inhibits the activation step when ARRB2 directly associates with NLRP3, leading to inhibition of pro-inflammatory cytokine release. Mediates LCFAs anti-apoptotic effects. This is Free fatty acid receptor 4 (FFAR4) from Macaca fascicularis (Crab-eating macaque).